Here is a 662-residue protein sequence, read N- to C-terminus: Methionine--tRNA ligase (662 aa).

Positions 13-23 (PYTNGPCHLGH) match the 'HIGH' region motif. Zn(2+) contacts are provided by cysteine 144, cysteine 147, cysteine 156, and cysteine 160. A 'KMSKS' region motif is present at residues 326–330 (KFSKS). Lysine 329 contributes to the ATP binding site. The tRNA-binding domain occupies 564 to 662 (DFSKVEIKTG…KPVEPGTKIR (99 aa)).

This sequence belongs to the class-I aminoacyl-tRNA synthetase family. MetG type 1 subfamily. Homodimer. Zn(2+) is required as a cofactor.

It localises to the cytoplasm. The catalysed reaction is tRNA(Met) + L-methionine + ATP = L-methionyl-tRNA(Met) + AMP + diphosphate. Functionally, is required not only for elongation of protein synthesis but also for the initiation of all mRNA translation through initiator tRNA(fMet) aminoacylation. This chain is Methionine--tRNA ligase, found in Methanoregula boonei (strain DSM 21154 / JCM 14090 / 6A8).